A 209-amino-acid polypeptide reads, in one-letter code: Holliday junction branch migration complex subunit RuvA (209 aa).

A domain I region spans residues 1–70 (MFSYLKGEAI…EDGTYLYGFA (70 aa)). Positions 71–149 (SAAARDLFRQ…QWRDQFSLPD (79 aa)) are domain II. Residues 149–153 (DTAAQ) are flexible linker. A domain III region spans residues 154 to 209 (PNAAVHEDLELTLLALGYQETEIRGAIATLSQDSILLQNDNADEWIRRAITLLSQT).

Belongs to the RuvA family. Homotetramer. Forms an RuvA(8)-RuvB(12)-Holliday junction (HJ) complex. HJ DNA is sandwiched between 2 RuvA tetramers; dsDNA enters through RuvA and exits via RuvB. An RuvB hexamer assembles on each DNA strand where it exits the tetramer. Each RuvB hexamer is contacted by two RuvA subunits (via domain III) on 2 adjacent RuvB subunits; this complex drives branch migration. In the full resolvosome a probable DNA-RuvA(4)-RuvB(12)-RuvC(2) complex forms which resolves the HJ.

The protein localises to the cytoplasm. In terms of biological role, the RuvA-RuvB-RuvC complex processes Holliday junction (HJ) DNA during genetic recombination and DNA repair, while the RuvA-RuvB complex plays an important role in the rescue of blocked DNA replication forks via replication fork reversal (RFR). RuvA specifically binds to HJ cruciform DNA, conferring on it an open structure. The RuvB hexamer acts as an ATP-dependent pump, pulling dsDNA into and through the RuvAB complex. HJ branch migration allows RuvC to scan DNA until it finds its consensus sequence, where it cleaves and resolves the cruciform DNA. The protein is Holliday junction branch migration complex subunit RuvA of Picosynechococcus sp. (strain ATCC 27264 / PCC 7002 / PR-6) (Agmenellum quadruplicatum).